The primary structure comprises 541 residues: Chaperonin GroEL (541 aa).

ATP is bound by residues 29–32 (TLGP), 86–90 (DGTTT), Gly-413, 476–478 (NAA), and Asp-492. The disordered stretch occupies residues 521 to 541 (KPEENAPAAPAAPNPGMGGMM). Positions 525–535 (NAPAAPAAPNP) are enriched in low complexity.

This sequence belongs to the chaperonin (HSP60) family. In terms of assembly, forms a cylinder of 14 subunits composed of two heptameric rings stacked back-to-back. Interacts with the co-chaperonin GroES.

It is found in the cytoplasm. It carries out the reaction ATP + H2O + a folded polypeptide = ADP + phosphate + an unfolded polypeptide.. Functionally, together with its co-chaperonin GroES, plays an essential role in assisting protein folding. The GroEL-GroES system forms a nano-cage that allows encapsulation of the non-native substrate proteins and provides a physical environment optimized to promote and accelerate protein folding. This is Chaperonin GroEL from Lactiplantibacillus plantarum (strain ATCC BAA-793 / NCIMB 8826 / WCFS1) (Lactobacillus plantarum).